A 269-amino-acid chain; its full sequence is 3-methyl-2-oxobutanoate hydroxymethyltransferase (269 aa).

Residues Asp-42 and Asp-81 each coordinate Mg(2+). Residues 42 to 43 (DS), Asp-81, and Lys-111 contribute to the 3-methyl-2-oxobutanoate site. Glu-113 lines the Mg(2+) pocket. The Proton acceptor role is filled by Glu-179. The interval 250–269 (SGEFPRESHSHTEDELDDLY) is disordered. Basic and acidic residues predominate over residues 252 to 262 (EFPRESHSHTE).

Belongs to the PanB family. Homodecamer; pentamer of dimers. Mg(2+) is required as a cofactor.

The protein localises to the cytoplasm. It carries out the reaction 3-methyl-2-oxobutanoate + (6R)-5,10-methylene-5,6,7,8-tetrahydrofolate + H2O = 2-dehydropantoate + (6S)-5,6,7,8-tetrahydrofolate. The protein operates within cofactor biosynthesis; coenzyme A biosynthesis. Catalyzes the reversible reaction in which hydroxymethyl group from 5,10-methylenetetrahydrofolate is transferred onto alpha-ketoisovalerate to form ketopantoate. This chain is 3-methyl-2-oxobutanoate hydroxymethyltransferase, found in Haloarcula marismortui (strain ATCC 43049 / DSM 3752 / JCM 8966 / VKM B-1809) (Halobacterium marismortui).